Here is a 282-residue protein sequence, read N- to C-terminus: Undecaprenyl-diphosphatase (282 aa).

The next 6 helical transmembrane spans lie at 51-71 (TLVA…AAVI), 87-107 (MGWM…LFET), 115-135 (SLYW…LAEG), 191-211 (ATAA…AGLY), 229-249 (NILV…AFLL), and 259-279 (IFIA…ATGV).

The protein belongs to the UppP family.

The protein localises to the cell inner membrane. The enzyme catalyses di-trans,octa-cis-undecaprenyl diphosphate + H2O = di-trans,octa-cis-undecaprenyl phosphate + phosphate + H(+). Its function is as follows. Catalyzes the dephosphorylation of undecaprenyl diphosphate (UPP). Confers resistance to bacitracin. The polypeptide is Undecaprenyl-diphosphatase (Pelodictyon phaeoclathratiforme (strain DSM 5477 / BU-1)).